A 167-amino-acid polypeptide reads, in one-letter code: Large ribosomal subunit protein bL9 (167 aa).

This sequence belongs to the bacterial ribosomal protein bL9 family.

Binds to the 23S rRNA. The protein is Large ribosomal subunit protein bL9 of Nitratidesulfovibrio vulgaris (strain ATCC 29579 / DSM 644 / CCUG 34227 / NCIMB 8303 / VKM B-1760 / Hildenborough) (Desulfovibrio vulgaris).